The primary structure comprises 355 residues: MALRLLKLAPASASARVVAAGAQRVRGIHSSVQCKLRYGMWRFLLGDKASKRLTERSRVITVDGNICTGKGKLAKEIAEKLGFKHFPEAGIHYPDSITGDGKPLAADYNGNCSLEKFYDDPRSNDGNTYRLQSWLYSSRLLQYSDALEHLLTTGQGVVLERSIFSDFVFLDAMYNQGFIRKQCVDHYNEVKSVTICDYLPPHLVIYIDVPVPEVQRRIQKKGDPHEMKITSAYLQDIENAYKKTFLPEMSEKCEVLQYSAREAQDSKKVVEDIEYLKFDKGPWLKQDNHTLYHLRLLVQDKFEVLNYTSIPVFLPEVTIGAHQTDRVLHQFRELPGRKYSPGYNTEVGDKWIWLK.

The transit peptide at 1 to 35 directs the protein to the mitochondrion; it reads MALRLLKLAPASASARVVAAGAQRVRGIHSSVQCK. Serine 250 is modified (phosphoserine; by PINK1). Lysine 285 carries the post-translational modification N6-succinyllysine.

The protein belongs to the complex I NDUFA10 subunit family. Complex I is composed of 45 different subunits. This a component of the hydrophobic protein fraction. Requires FAD as cofactor. In terms of processing, phosphorylation at Ser-250 by PINK1 is required for the binding and/or reduction of the complex I substrate ubiquinone.

The protein localises to the mitochondrion matrix. Accessory subunit of the mitochondrial membrane respiratory chain NADH dehydrogenase (Complex I), that is believed not to be involved in catalysis. Complex I functions in the transfer of electrons from NADH to the respiratory chain. The immediate electron acceptor for the enzyme is believed to be ubiquinone. This is NADH dehydrogenase [ubiquinone] 1 alpha subcomplex subunit 10, mitochondrial (NDUFA10) from Pongo abelii (Sumatran orangutan).